Consider the following 359-residue polypeptide: Histidinol-phosphate aminotransferase (359 aa).

K217 is subject to N6-(pyridoxal phosphate)lysine.

Belongs to the class-II pyridoxal-phosphate-dependent aminotransferase family. Histidinol-phosphate aminotransferase subfamily. As to quaternary structure, homodimer. Pyridoxal 5'-phosphate serves as cofactor.

The enzyme catalyses L-histidinol phosphate + 2-oxoglutarate = 3-(imidazol-4-yl)-2-oxopropyl phosphate + L-glutamate. It functions in the pathway amino-acid biosynthesis; L-histidine biosynthesis; L-histidine from 5-phospho-alpha-D-ribose 1-diphosphate: step 7/9. This chain is Histidinol-phosphate aminotransferase, found in Citrobacter koseri (strain ATCC BAA-895 / CDC 4225-83 / SGSC4696).